Reading from the N-terminus, the 120-residue chain is Putative B3 domain-containing protein At3g28853 (120 aa).

The TF-B3 DNA-binding region spans Ile19–Ile120.

Its subcellular location is the nucleus. This chain is Putative B3 domain-containing protein At3g28853, found in Arabidopsis thaliana (Mouse-ear cress).